The following is a 379-amino-acid chain: Bifunctional riboflavin kinase/FMN phosphatase (379 aa).

The residue at position 2 (S2) is an N-acetylserine. D17 serves as the catalytic Nucleophile; for FMN phosphatase activity. Residues D17 and D19 each coordinate Mg(2+). D19 acts as the Proton donor; for FMN phosphatase activity in catalysis. ATP is bound by residues G248, K254, T260, and N262. Mg(2+) is bound at residue T260. Catalysis depends on E312, which acts as the Nucleophile; for riboflavin kinase activity. Residues L315, H317, and Y324 each coordinate ATP. 2 residues coordinate FMN: R337 and F342.

In the N-terminal section; belongs to the HAD-like hydrolase superfamily. CbbY/CbbZ/Gph/YieH family. This sequence in the C-terminal section; belongs to the flavokinase family. In terms of assembly, monomer. Mg(2+) serves as cofactor.

The enzyme catalyses riboflavin + ATP = FMN + ADP + H(+). It carries out the reaction FMN + H2O = riboflavin + phosphate. Its pathway is cofactor biosynthesis; FMN biosynthesis; FMN from riboflavin (ATP route): step 1/1. Bifunctional enzyme that catalyzes the hydrolysis of flavin-mononucleotide (FMN) to riboflavin (vitamin B2) and the phosphorylation of riboflavin to form (FMN) coenzyme. This is Bifunctional riboflavin kinase/FMN phosphatase from Arabidopsis thaliana (Mouse-ear cress).